Consider the following 556-residue polypeptide: Glutamine--tRNA ligase (556 aa).

The 'HIGH' region signature appears at 34 to 44; the sequence is PEPNGYLHIGH. Residues 35-37 and 41-47 each bind ATP; these read EPN and HIGHAKS. 2 residues coordinate L-glutamine: D67 and Y212. ATP is bound by residues T231, 261–262, and 269–271; these read RL and MSK. The short motif at 268-272 is the 'KMSKS' region element; sequence IMSKR.

The protein belongs to the class-I aminoacyl-tRNA synthetase family. Monomer.

Its subcellular location is the cytoplasm. It carries out the reaction tRNA(Gln) + L-glutamine + ATP = L-glutaminyl-tRNA(Gln) + AMP + diphosphate. The chain is Glutamine--tRNA ligase from Sodalis glossinidius (strain morsitans).